The primary structure comprises 545 residues: Esterase-5C (545 aa).

The N-terminal stretch at 1–19 is a signal peptide; sequence MLAARLIILLSFYWLSASA. Cys-84 and Cys-103 are oxidised to a cystine. A glycan (N-linked (GlcNAc...) asparagine) is linked at Asn-113. Ser-207 (acyl-ester intermediate) is an active-site residue. Cys-259 and Cys-271 form a disulfide bridge. A glycan (N-linked (GlcNAc...) asparagine) is linked at Asn-421. His-467 serves as the catalytic Charge relay system. An N-linked (GlcNAc...) asparagine glycan is attached at Asn-507. A disulfide bridge links Cys-515 with Cys-536.

It belongs to the type-B carboxylesterase/lipase family.

Its subcellular location is the secreted. The catalysed reaction is a carboxylic ester + H2O = an alcohol + a carboxylate + H(+). The protein is Esterase-5C (Est-5C) of Drosophila pseudoobscura pseudoobscura (Fruit fly).